The chain runs to 307 residues: Farnesol kinase, chloroplastic (307 aa).

Residues 1-65 (MATTSTTTKL…TKIRKSSLAA (65 aa)) constitute a chloroplast transit peptide. The next 7 membrane-spanning stretches (helical) occupy residues 77–97 (VCAFGVTSIVAFSCLGFWGEI), 116–136 (IGLVFMLCWPLFSSGIQGALF), 137–157 (ASLVPGLNIVRMLLLGLGVYH), 177–194 (GPLYYVLSITSACIYYWK), 197–217 (PIAIAVICNLCAGDGMADIVG), 237–257 (IGMATAGFLASVAYMYYFASF), and 265–285 (GMILRFLVISIASALVESLPI).

Belongs to the polyprenol kinase family.

It is found in the plastid. It localises to the chloroplast membrane. It carries out the reaction (2E,6E)-farnesol + CTP = (2E,6E)-farnesyl phosphate + CDP + H(+). The catalysed reaction is (2E,6E)-farnesol + ATP = (2E,6E)-farnesyl phosphate + ADP + H(+). The enzyme catalyses (2E)-geraniol + ATP = (2E)-geranyl phosphate + ADP + H(+). It catalyses the reaction (2E,6E,10E)-geranylgeraniol + ATP = (2E,6E,10E)-geranylgeranyl phosphate + ADP + H(+). In terms of biological role, kinase involved in negative regulation of abscisic acid (ABA) signaling. Substrate preference is farnesol &gt; geraniol &gt; geranylgeraniol, but has no activity with farnesyl phosphate. Can use CTP &gt; ATP &gt; GTP = UTP as phosphoryl donor. The sequence is that of Farnesol kinase, chloroplastic from Arabidopsis thaliana (Mouse-ear cress).